An 81-amino-acid polypeptide reads, in one-letter code: Sec-independent protein translocase protein TatA (81 aa).

The helical transmembrane segment at 1–21 (MGSLSLWHWIIVGAVLLLLFG) threads the bilayer. Positions 41–81 (KKGLSEDDEKPEAARPAEPARSLDHQPVAEQPKVSETHRIG) are disordered.

This sequence belongs to the TatA/E family. As to quaternary structure, the Tat system comprises two distinct complexes: a TatABC complex, containing multiple copies of TatA, TatB and TatC subunits, and a separate TatA complex, containing only TatA subunits. Substrates initially bind to the TatABC complex, which probably triggers association of the separate TatA complex to form the active translocon.

The protein localises to the cell inner membrane. Its function is as follows. Part of the twin-arginine translocation (Tat) system that transports large folded proteins containing a characteristic twin-arginine motif in their signal peptide across membranes. TatA could form the protein-conducting channel of the Tat system. This chain is Sec-independent protein translocase protein TatA, found in Beijerinckia indica subsp. indica (strain ATCC 9039 / DSM 1715 / NCIMB 8712).